The sequence spans 406 residues: uncharacterized protein (406 aa).

The protein belongs to the glycosyltransferase group 1 family. Glycosyltransferase 4 subfamily.

This is an uncharacterized protein from Methanocaldococcus jannaschii (strain ATCC 43067 / DSM 2661 / JAL-1 / JCM 10045 / NBRC 100440) (Methanococcus jannaschii).